A 411-amino-acid polypeptide reads, in one-letter code: Tyrosine--tRNA ligase (411 aa).

Position 34 (Tyr-34) interacts with L-tyrosine. The 'HIGH' region motif lies at 39-48 (CTATSLHIGS). The L-tyrosine site is built by Tyr-171 and Gln-175. The 'KMSKS' region motif lies at 231-235 (KMGKT). Lys-234 serves as a coordination point for ATP. Residues 345–411 (ISAYELFHEA…GKKRHILVRV (67 aa)) form the S4 RNA-binding domain.

This sequence belongs to the class-I aminoacyl-tRNA synthetase family. TyrS type 1 subfamily. Homodimer.

The protein localises to the cytoplasm. The enzyme catalyses tRNA(Tyr) + L-tyrosine + ATP = L-tyrosyl-tRNA(Tyr) + AMP + diphosphate + H(+). Catalyzes the attachment of tyrosine to tRNA(Tyr) in a two-step reaction: tyrosine is first activated by ATP to form Tyr-AMP and then transferred to the acceptor end of tRNA(Tyr). In Rickettsia peacockii (strain Rustic), this protein is Tyrosine--tRNA ligase.